The sequence spans 870 residues: Disks large homolog 2 (870 aa).

S-palmitoyl cysteine attachment occurs at residues C5 and C7. A Phosphoserine modification is found at S28. Y58 carries the post-translational modification Phosphotyrosine. Phosphoserine is present on S65. 2 consecutive PDZ domains span residues E98–R184 and E193–P279. A phosphoserine mark is found at S307, S328, S360, S365, S406, and S414. The PDZ 3 domain maps to K421–Q501. Y505 carries the phosphotyrosine modification. Residues S528, S530, S553, S627, and S635 each carry the phosphoserine modification. The region spanning K536–E606 is the SH3 domain. The region spanning T680–E855 is the Guanylate kinase-like domain. A phosphotyrosine mark is found at Y750 and Y755.

The protein belongs to the MAGUK family. As to quaternary structure, interacts through its PDZ domains with NETO1. Interacts with NOS1/nNOS through second PDZ domain. Interacts with KCNJ2/Kir2.1 (via C-terminus) through one of its PDZ domains. Interacts with KCNJ4, Interacts with FRMPD4 (via C-terminus). Interacts with LRFN1, LRFN2 and LRFN4. Interacts with FASLG. Interacts with KCNJ4. Interacts with ADAM22. Interacts with DGKI (via PDZ-binding motif). In terms of processing, palmitoylation of isoform 1 is not required for targeting to postsynaptic density.

It localises to the cell membrane. The protein resides in the postsynaptic density. The protein localises to the synapse. Its subcellular location is the membrane. It is found in the cell projection. It localises to the axon. The protein resides in the perikaryon. Functionally, required for perception of chronic pain through NMDA receptor signaling. Regulates surface expression of NMDA receptors in dorsal horn neurons of the spinal cord. Interacts with the cytoplasmic tail of NMDA receptor subunits as well as inward rectifying potassium channels. Involved in regulation of synaptic stability at cholinergic synapses. Part of the postsynaptic protein scaffold of excitatory synapses. In Homo sapiens (Human), this protein is Disks large homolog 2 (DLG2).